The following is a 431-amino-acid chain: Adenylosuccinate synthetase (431 aa).

GTP-binding positions include 13–19 and 41–43; these read GDEGKGK and GHT. The active-site Proton acceptor is the D14. Mg(2+) is bound by residues D14 and G41. IMP is bound by residues 14-17, 39-42, T130, R144, Q225, T240, and R304; these read DEGK and NAGH. The active-site Proton donor is the H42. 300–306 provides a ligand contact to substrate; sequence ATTGRKR. GTP is bound by residues R306, 332–334, and 415–417; these read KLD and STG.

Belongs to the adenylosuccinate synthetase family. As to quaternary structure, homodimer. The cofactor is Mg(2+).

The protein localises to the cytoplasm. It catalyses the reaction IMP + L-aspartate + GTP = N(6)-(1,2-dicarboxyethyl)-AMP + GDP + phosphate + 2 H(+). It participates in purine metabolism; AMP biosynthesis via de novo pathway; AMP from IMP: step 1/2. In terms of biological role, plays an important role in the de novo pathway of purine nucleotide biosynthesis. Catalyzes the first committed step in the biosynthesis of AMP from IMP. The sequence is that of Adenylosuccinate synthetase from Shewanella loihica (strain ATCC BAA-1088 / PV-4).